The sequence spans 625 residues: MSWRSNAQRTGMNAQPLQGARRWGGAGGAGEGPSSSGSPPSSYHQPSHPYQSSYSHQSQPYNAAPAPPTSSSSSSSNPRDAALAAAAAVAASIGIKRDRDRSSDAPGSNSYAAPSLLTSASTADGSGADAGPRKRKSRWGDANDKITIPTAIGANVSAQELDKYAIQVRLDEISRKLRSGDFVPPDRERSPSPPPTYDNQGRRTNTREVRYRKKLEDERVALVDRQLKLDPNFRPPSDYHAIKRNQRPTEKVYLPIKEFPEIKFFGLLVGPRGNTLKTMERQSGAKISIRGKGSVKTGKGKMDADEDEEEMHCVVTADDEASVKKCIKLINQVIETAASTPEGENDHKRNQLRELAALNGTLRDDENQLCKNCGNKGHRAFECPEQRNWTAHIICHRCGGQGHLARDCTQGRAGAFNGAPPGAAGTGNRQFDSEYANLMAELGEPAAAVDGAATAAGGAVGGAAVGPDGKKIPPWRNPEVWSQPGFGAPRGGDAGRGGWGHRGGYNNRGDRAGYNQHQQQQHPHAYHQQQQAYPAYDQSAPTAAPGGAENADQQHRDYSAEWAAYYAAQAAAGGAQGADPSAAAAGTTAAAEGAVDYSKEWEEYYRMQAAAAAQDGSAYAAGTQA.

Residues 1–16 (MSWRSNAQRTGMNAQP) show a composition bias toward polar residues. Disordered stretches follow at residues 1–154 (MSWR…AIGA) and 177–206 (LRSG…RTNT). Gly residues predominate over residues 22–31 (RWGGAGGAGE). 3 stretches are compositionally biased toward low complexity: residues 32-61 (GPSS…SQPY), 70-91 (SSSS…AVAA), and 110-130 (SYAA…GADA). The span at 177–190 (LRSGDFVPPDRERS) shows a compositional bias: basic and acidic residues. The region spanning 253–330 (YLPIKEFPEI…ASVKKCIKLI (78 aa)) is the KH domain. 2 consecutive CCHC-type zinc fingers follow at residues 368-385 (QLCK…ECPE) and 393-410 (IICH…DCTQ). A disordered region spans residues 466–533 (GPDGKKIPPW…HAYHQQQQAY (68 aa)). Over residues 488-503 (APRGGDAGRGGWGHRG) the composition is skewed to gly residues. Positions 516–533 (QHQQQQHPHAYHQQQQAY) are enriched in low complexity.

It belongs to the BBP/SF1 family.

The protein localises to the nucleus. Functionally, necessary for the splicing of pre-mRNA. Has a role in the recognition of the branch site (5'-UACUAAC-3'), the pyrimidine tract and the 3'-splice site at the 3'-end of introns. The polypeptide is Branchpoint-bridging protein (BBP) (Mycosarcoma maydis (Corn smut fungus)).